Consider the following 435-residue polypeptide: 3-phosphoshikimate 1-carboxyvinyltransferase (435 aa).

Residues K22, S23, and R27 each coordinate 3-phosphoshikimate. Residue K22 coordinates phosphoenolpyruvate. G95 and R123 together coordinate phosphoenolpyruvate. 3-phosphoshikimate is bound by residues S168, Q170, D319, and K346. Q170 contributes to the phosphoenolpyruvate binding site. D319 acts as the Proton acceptor in catalysis. The phosphoenolpyruvate site is built by R350 and R393.

This sequence belongs to the EPSP synthase family. Monomer.

The protein localises to the cytoplasm. The enzyme catalyses 3-phosphoshikimate + phosphoenolpyruvate = 5-O-(1-carboxyvinyl)-3-phosphoshikimate + phosphate. It functions in the pathway metabolic intermediate biosynthesis; chorismate biosynthesis; chorismate from D-erythrose 4-phosphate and phosphoenolpyruvate: step 6/7. In terms of biological role, catalyzes the transfer of the enolpyruvyl moiety of phosphoenolpyruvate (PEP) to the 5-hydroxyl of shikimate-3-phosphate (S3P) to produce enolpyruvyl shikimate-3-phosphate and inorganic phosphate. The polypeptide is 3-phosphoshikimate 1-carboxyvinyltransferase (Chloroflexus aurantiacus (strain ATCC 29364 / DSM 637 / Y-400-fl)).